Here is a 78-residue protein sequence, read N- to C-terminus: UPF0349 protein BH3414 (78 aa).

The protein belongs to the UPF0349 family.

The polypeptide is UPF0349 protein BH3414 (Halalkalibacterium halodurans (strain ATCC BAA-125 / DSM 18197 / FERM 7344 / JCM 9153 / C-125) (Bacillus halodurans)).